The primary structure comprises 108 residues: Small ribosomal subunit protein uS17 (108 aa).

Residues 1–26 (MREKMAEATETQASETSTRGRPKTRV) are disordered. Positions 8 to 17 (ATETQASETS) are enriched in low complexity.

This sequence belongs to the universal ribosomal protein uS17 family. As to quaternary structure, part of the 30S ribosomal subunit.

One of the primary rRNA binding proteins, it binds specifically to the 5'-end of 16S ribosomal RNA. The polypeptide is Small ribosomal subunit protein uS17 (Myxococcus xanthus (strain DK1622)).